The primary structure comprises 75 residues: Small ribosomal subunit protein bS18c (75 aa).

The span at methionine 1 to leucine 12 shows a compositional bias: basic residues. The disordered stretch occupies residues methionine 1 to isoleucine 21.

The protein belongs to the bacterial ribosomal protein bS18 family. Part of the 30S ribosomal subunit.

It is found in the plastid. It localises to the chloroplast. This is Small ribosomal subunit protein bS18c from Cycas taitungensis (Prince sago).